The primary structure comprises 233 residues: Probable transglycosylase IsaA (233 aa).

The N-terminal stretch at 1–29 (MKKTIMASSLAVALGVTGYAASTGHEAHA) is a signal peptide.

It belongs to the transglycosylase family. IsaA subfamily.

Its subcellular location is the secreted. Is able to cleave peptidoglycan. In Staphylococcus aureus (strain bovine RF122 / ET3-1), this protein is Probable transglycosylase IsaA (isaA).